A 590-amino-acid polypeptide reads, in one-letter code: DELLA protein GAI1 (590 aa).

Residues 1–10 show a composition bias toward basic residues; that stretch reads MKREYHHPHH. The disordered stretch occupies residues 1–28; that stretch reads MKREYHHPHHPTCSTSPTGKGKMWDADP. Residues 35-39 carry the DELLA motif motif; the sequence is DELLA. Residues 153–182 are disordered; it reads HIEQPPQQPPAPPLYQRDNKRLKPTTSATA. The GRAS domain maps to 205–575; that stretch reads VDSQETGIRL…RPLIATSAWQ (371 aa). The tract at residues 212 to 266 is leucine repeat I (LRI); it reads IRLVHTLMACAEAVQQENLKLAEALVKQIGFLAVSQAGAMRKVATYFAEGLARRI. Positions 284 to 349 are VHIID; the sequence is QMHFYETCPY…GGPPSFRLTG (66 aa). The short motif at 315–319 is the VHIID element; it reads VHVID. The tract at residues 363–395 is leucine repeat II (LRII); that stretch reads EVGWKLAQLAETIHVEFEYRGFVANSLADLDAS. The tract at residues 405–496 is PFYRE; the sequence is VAVNSVFELH…EVYLGQQICN (92 aa). An LXXLL motif motif is present at residues 413-417; it reads LHSLL. Residues 499–575 form an SAW region; sequence ACEGPERVER…RPLIATSAWQ (77 aa).

The protein belongs to the GRAS family. DELLA subfamily. Phosphorylated. Post-translationally, ubiquitinated. Upon GA application it is ubiquitinated, leading to its subsequent degradation.

Its subcellular location is the nucleus. Its function is as follows. Probable transcriptional regulator that acts as a repressor of the gibberellin (GA) signaling pathway. Probably acts by participating in large multiprotein complexes that repress transcription of GA-inducible genes. Upon GA application, it is degraded by the proteasome, allowing the GA signaling pathway. The protein is DELLA protein GAI1 (GAI1) of Vitis vinifera (Grape).